Reading from the N-terminus, the 182-residue chain is MKVNKELARKLSKKIVFSVPKDKESLSAVSDFLGLLGVLYKKEPKFRDFVLSPFVSNEQKKLFIKSLIQKGNIPKEIEFFVDELIDLNLLRIVGEIKRLFDYESEKILSIYKGKLIFAKEPVKELVDEIIQRVEKVLNRKIEPEISVNEALIGGFELRLSGLVLDTSVRSVLQNLSNKVKSL.

The protein belongs to the ATPase delta chain family. F-type ATPases have 2 components, F(1) - the catalytic core - and F(0) - the membrane proton channel. F(1) has five subunits: alpha(3), beta(3), gamma(1), delta(1), epsilon(1). F(0) has three main subunits: a(1), b(2) and c(10-14). The alpha and beta chains form an alternating ring which encloses part of the gamma chain. F(1) is attached to F(0) by a central stalk formed by the gamma and epsilon chains, while a peripheral stalk is formed by the delta and b chains.

It localises to the cell inner membrane. Its function is as follows. F(1)F(0) ATP synthase produces ATP from ADP in the presence of a proton or sodium gradient. F-type ATPases consist of two structural domains, F(1) containing the extramembraneous catalytic core and F(0) containing the membrane proton channel, linked together by a central stalk and a peripheral stalk. During catalysis, ATP synthesis in the catalytic domain of F(1) is coupled via a rotary mechanism of the central stalk subunits to proton translocation. In terms of biological role, this protein is part of the stalk that links CF(0) to CF(1). It either transmits conformational changes from CF(0) to CF(1) or is implicated in proton conduction. This Hydrogenobaculum sp. (strain Y04AAS1) protein is ATP synthase subunit delta.